Reading from the N-terminus, the 408-residue chain is MKQESSLLAKLANGSLVLQILLGIAAGVILASFSQDAAKQVAFLGSLFVGALKAIAPILVFILVASSIANQKKNTQTNMRPIVVLYLFGTFAAALTAVVLSSIFPTNLVLVAGIEGTSPPQGIGEVINTLLFKLVDNPVNALMTGNYIGILAWGVGLGLALHHANDSTKQVFADMSHGISQMVRFIIRLAPIGIFGLVAATFAETGFAAIAGYAQLLAVLLSAMAIIALIVNPLIVYVKIKRNPYPLVLRCLRESGVTAFFTRSSAANIPVNMALCEKLNLNKDTYSVSIPLGATINMGGAAITITVLTLAAVHTLGIQVDLPTALLLSVVAAVSACGASGVAGGSLLLIPLACSLFGISNDIAMQVVAVGFIIGVIQDAAETALNSSTDVIFTAAACEAAENKAKLG.

9 consecutive transmembrane segments (helical) span residues 11 to 31 (LANG…VILA), 43 to 63 (FLGS…VFIL), 81 to 101 (PIVV…VVLS), 141 to 161 (ALMT…GLAL), 192 to 212 (IGIF…AIAG), 216 to 236 (LLAV…PLIV), 298 to 318 (MGGA…TLGI), 330 to 350 (VVAA…LLLI), and 357 to 377 (FGIS…IGVI).

The protein belongs to the dicarboxylate/amino acid:cation symporter (DAACS) (TC 2.A.23) family.

It localises to the cell inner membrane. The enzyme catalyses L-serine(in) + Na(+)(in) = L-serine(out) + Na(+)(out). It catalyses the reaction L-threonine(in) + Na(+)(in) = L-threonine(out) + Na(+)(out). Functionally, involved in the import of serine and threonine into the cell, with the concomitant import of sodium (symport system). This Shewanella sp. (strain W3-18-1) protein is Serine/threonine transporter SstT.